The chain runs to 170 residues: RxLR effector protein CRE16 (170 aa).

The N-terminal stretch at 1-23 (MSKLFYAFAVLAVHVLTSSPTTA) is a signal peptide. The RxLR-dEER motif lies at 47 to 68 (RFLRSIHEGEDSLKPSAFSEER).

It belongs to the RxLR effector family.

It localises to the secreted. Its subcellular location is the host cytoplasm. The protein resides in the host nucleus. Effector that is involved in host plant infection. Contributes to virulence during the early infection stage, by inhibiting plant defense responses induced by both PAMP-triggered immunity (PTI) and effector-triggered immunity (ETI). In Phytophthora infestans (strain T30-4) (Potato late blight agent), this protein is RxLR effector protein CRE16.